The primary structure comprises 787 residues: Disintegrin and metalloproteinase domain-containing protein 32 (787 aa).

An N-terminal signal peptide occupies residues 1–16 (MFRLWLLLAGLCGLLA). Position 17 is a phosphoserine (Ser17). Positions 17 to 174 (SRPGFQNSLL…PMDDNIFISE (158 aa)) are excised as a propeptide. 2 N-linked (GlcNAc...) asparagine glycosylation sites follow: Asn39 and Asn125. The Extracellular segment spans residues 175–682 (KSEPAVPDLF…ERASGKTENT (508 aa)). One can recognise a Peptidase M12B domain in the interval 186 to 383 (LYLEMHIVVD…VGVKCLQNKP (198 aa)). Intrachain disulfides connect Cys295–Cys378, Cys337–Cys362, Cys339–Cys344, and Cys450–Cys471. The Disintegrin domain occupies 391–479 (KPVCGNGRLE…ECGPDITLIN (89 aa)). N-linked (GlcNAc...) asparagine glycans are attached at residues Asn465 and Asn598. Residues 622–654 (SAHVCSQQCSGHGVCDSRNKCHCSPGYKPPNCQ) enclose the EGF-like domain. 3 cysteine pairs are disulfide-bonded: Cys626-Cys636, Cys630-Cys642, and Cys644-Cys653. A helical membrane pass occupies residues 683–703 (WLLGFLIALPILIVTTAIVLA). The Cytoplasmic portion of the chain corresponds to 704–787 (RKQLKKWFAK…DSTQTQSSSN (84 aa)). Residues 715–787 (EEFPSSESKS…DSTQTQSSSN (73 aa)) are disordered. Positions 728–749 (TQTYASQSSSEGSTQTYASQTR) are enriched in polar residues. Residues 771 to 787 (TSRSKSQDSTQTQSSSN) show a composition bias toward low complexity.

As to expression, testis specific.

It is found in the membrane. Its function is as follows. May play a role in sperm development and fertilization This is a non-catalytic metalloprotease-like protein. In Homo sapiens (Human), this protein is Disintegrin and metalloproteinase domain-containing protein 32 (ADAM32).